The chain runs to 385 residues: Lipoyl synthase, mitochondrial (385 aa).

[4Fe-4S] cluster is bound by residues Cys-107, Cys-112, Cys-118, Cys-137, Cys-141, Cys-144, and Ser-352. The Radical SAM core domain occupies 122 to 341 (KKSEATATIM…RDTALKMGFL (220 aa)).

Belongs to the radical SAM superfamily. Lipoyl synthase family. The cofactor is [4Fe-4S] cluster.

The protein resides in the mitochondrion. It catalyses the reaction [[Fe-S] cluster scaffold protein carrying a second [4Fe-4S](2+) cluster] + N(6)-octanoyl-L-lysyl-[protein] + 2 oxidized [2Fe-2S]-[ferredoxin] + 2 S-adenosyl-L-methionine + 4 H(+) = [[Fe-S] cluster scaffold protein] + N(6)-[(R)-dihydrolipoyl]-L-lysyl-[protein] + 4 Fe(3+) + 2 hydrogen sulfide + 2 5'-deoxyadenosine + 2 L-methionine + 2 reduced [2Fe-2S]-[ferredoxin]. It functions in the pathway protein modification; protein lipoylation via endogenous pathway; protein N(6)-(lipoyl)lysine from octanoyl-[acyl-carrier-protein]: step 2/2. Catalyzes the radical-mediated insertion of two sulfur atoms into the C-6 and C-8 positions of the octanoyl moiety bound to the lipoyl domains of lipoate-dependent enzymes, thereby converting the octanoylated domains into lipoylated derivatives. The polypeptide is Lipoyl synthase, mitochondrial (Meyerozyma guilliermondii (strain ATCC 6260 / CBS 566 / DSM 6381 / JCM 1539 / NBRC 10279 / NRRL Y-324) (Yeast)).